The sequence spans 342 residues: Glutamyl endopeptidase (342 aa).

An N-terminal signal peptide occupies residues 1-29; it reads MKGKFLKVSSLFVATLTTATLVSSPAANA. Residues 30–68 constitute a propeptide that is removed on maturation; it reads LSSKAMDNHPQQTQSSKQQTPKIKKGGNLKPLEQREHAN. Residues 33–63 form a disordered region; sequence KAMDNHPQQTQSSKQQTPKIKKGGNLKPLEQ. Over residues 39–50 the composition is skewed to low complexity; it reads PQQTQSSKQQTP. Catalysis depends on charge relay system residues H119, D161, and S237. Residues 283–342 are disordered; sequence FANDDQPNNPDNPDNPNNPDNPNNPDNPNNPDEPNNPDNPNNPDNPDNGDNNNSDNPDAA. Over residues 286–342 the composition is skewed to low complexity; the sequence is DDQPNNPDNPDNPNNPDNPNNPDNPNNPDEPNNPDNPNNPDNPDNGDNNNSDNPDAA. 13 tandem repeats follow at residues 289 to 291, 292 to 294, 295 to 297, 298 to 300, 301 to 303, 304 to 306, 307 to 309, 310 to 312, 316 to 318, 319 to 321, 322 to 324, 325 to 327, and 328 to 330. Residues 289–330 form a 13 X 3 AA repeats of P-[DN]-N region; it reads PNNPDNPDNPNNPDNPNNPDNPNNPDEPNNPDNPNNPDNPDN.

This sequence belongs to the peptidase S1B family. Proteolytically cleaved by aureolysin (aur). This cleavage leads to the activation of SspA.

It is found in the secreted. The catalysed reaction is Preferential cleavage: Glu-|-Xaa, Asp-|-Xaa.. Its function is as follows. Preferentially cleaves peptide bonds on the carboxyl-terminal side of aspartate and glutamate. Along with other extracellular proteases it is involved in colonization and infection of human tissues. Required for proteolytic maturation of thiol protease SspB and inactivation of SspC, an inhibitor of SspB. It is the most important protease for degradation of fibronectin-binding protein (FnBP) and surface protein A, which are involved in adherence to host cells. May also protect bacteria against host defense mechanism by cleaving the immunoglobulin classes IgG, IgA and IgM. May be involved in the stability of secreted lipases. The polypeptide is Glutamyl endopeptidase (sspA) (Staphylococcus aureus (strain Mu50 / ATCC 700699)).